The sequence spans 535 residues: Nuclear/nucleolar GTPase 2 (535 aa).

The interval 1–42 is disordered; the sequence is MAKKKERAVNVSGKPRHSLDVNRANDKKGAGGGAGGGGGGRS. A compositionally biased stretch (basic and acidic residues) spans 17-29; sequence HSLDVNRANDKKG. The span at 30 to 41 shows a compositional bias: gly residues; sequence AGGGAGGGGGGR. Residues 213 to 374 form the CP-type G domain; that stretch reads WGELYKVIDS…LIDCPGVVYQ (162 aa). Residues 261 to 264 form a G4 region; the sequence is NKCD. The interval 290-292 is G5; it reads SIN. The G1 stretch occupies residues 323–330; that stretch reads GYPNVGKS. Positions 349 to 353 are G2; sequence GETKV. Residues 367–370 form a G3 region; that stretch reads DCPG. The disordered stretch occupies residues 464-495; it reads FFVPPPQQGEDSPSETAEPVDKSDEEGVSSDR.

It belongs to the TRAFAC class YlqF/YawG GTPase family. RsgA subfamily.

It is found in the nucleus. It localises to the nucleolus. Its function is as follows. GTPase involved in pre-60S ribosomal subunit maturation. The sequence is that of Nuclear/nucleolar GTPase 2 from Oryza sativa subsp. indica (Rice).